The chain runs to 332 residues: Arabinogalactan endo-beta-1,4-galactanase (332 aa).

An N-linked (GlcNAc...) asparagine glycan is attached at Asn111. Glu135 functions as the Proton donor in the catalytic mechanism. The active-site Nucleophile is Glu245.

The protein belongs to the glycosyl hydrolase 53 family.

The enzyme catalyses The enzyme specifically hydrolyzes (1-&gt;4)-beta-D-galactosidic linkages in type I arabinogalactans.. The chain is Arabinogalactan endo-beta-1,4-galactanase from Thermothelomyces thermophilus (Myceliophthora thermophila).